The chain runs to 734 residues: Photosystem I P700 chlorophyll a apoprotein A2 (734 aa).

8 helical membrane-spanning segments follow: residues 46–69 (IFAS…FHVA), 135–158 (LYTG…LHLQ), 175–199 (LNHH…HVAI), 273–291 (MAHH…GHMY), 330–353 (LHFQ…QHMY), 369–395 (AALY…IFFI), 417–439 (AIIS…LYVH), and 517–535 (FLVH…LILV). [4Fe-4S] cluster is bound by residues Cys-559 and Cys-568. The next 2 membrane-spanning stretches (helical) occupy residues 575–596 (AFYL…YWHW) and 643–665 (LSVW…MFLI). His-654, Met-662, and Tyr-670 together coordinate chlorophyll a. Trp-671 is a binding site for phylloquinone. A helical transmembrane segment spans residues 707-727 (LVGLAHFSVGYIFTYAAFLIA).

Belongs to the PsaA/PsaB family. The PsaA/B heterodimer binds the P700 chlorophyll special pair and subsequent electron acceptors. PSI consists of a core antenna complex that captures photons, and an electron transfer chain that converts photonic excitation into a charge separation. The eukaryotic PSI reaction center is composed of at least 11 subunits. It depends on P700 is a chlorophyll a/chlorophyll a' dimer, A0 is one or more chlorophyll a, A1 is one or both phylloquinones and FX is a shared 4Fe-4S iron-sulfur center. as a cofactor.

It is found in the plastid. Its subcellular location is the chloroplast thylakoid membrane. The enzyme catalyses reduced [plastocyanin] + hnu + oxidized [2Fe-2S]-[ferredoxin] = oxidized [plastocyanin] + reduced [2Fe-2S]-[ferredoxin]. Its function is as follows. PsaA and PsaB bind P700, the primary electron donor of photosystem I (PSI), as well as the electron acceptors A0, A1 and FX. PSI is a plastocyanin-ferredoxin oxidoreductase, converting photonic excitation into a charge separation, which transfers an electron from the donor P700 chlorophyll pair to the spectroscopically characterized acceptors A0, A1, FX, FA and FB in turn. Oxidized P700 is reduced on the lumenal side of the thylakoid membrane by plastocyanin. The protein is Photosystem I P700 chlorophyll a apoprotein A2 of Lactuca sativa (Garden lettuce).